A 236-amino-acid chain; its full sequence is Auxin-responsive protein IAA13 (236 aa).

3 disordered regions span residues Met1–Ala24, Glu52–Val93, and Ser105–Ser130. The EAR-like (transcriptional repression) motif lies at Leu12 to Leu16. Over residues Glu52–Pro61 the composition is skewed to low complexity. The segment covering Ala62–Pro81 has biased composition (basic and acidic residues). A compositionally biased stretch (low complexity) spans Gln117 to Ser130. Residues Ser131–Gly218 enclose the PB1 domain.

This sequence belongs to the Aux/IAA family. Homodimers and heterodimers.

Its subcellular location is the nucleus. In terms of biological role, aux/IAA proteins are short-lived transcriptional factors that function as repressors of early auxin response genes at low auxin concentrations. The polypeptide is Auxin-responsive protein IAA13 (IAA13) (Oryza sativa subsp. japonica (Rice)).